Reading from the N-terminus, the 238-residue chain is Ribosomal RNA small subunit methyltransferase G (238 aa).

S-adenosyl-L-methionine contacts are provided by residues Gly-77, Phe-82, 128 to 129, and Arg-147; that span reads AE.

This sequence belongs to the methyltransferase superfamily. RNA methyltransferase RsmG family.

Its subcellular location is the cytoplasm. Specifically methylates the N7 position of guanine in position 535 of 16S rRNA. The sequence is that of Ribosomal RNA small subunit methyltransferase G from Listeria monocytogenes serotype 4b (strain CLIP80459).